A 220-amino-acid chain; its full sequence is RNA-free ribonuclease P (220 aa).

The protein belongs to the HARP family.

It carries out the reaction Endonucleolytic cleavage of RNA, removing 5'-extranucleotides from tRNA precursor.. In terms of biological role, RNA-free RNase P that catalyzes the removal of the 5'-leader sequence from pre-tRNA to produce the mature 5'-terminus. The chain is RNA-free ribonuclease P from Methanothermobacter thermautotrophicus (strain ATCC 29096 / DSM 1053 / JCM 10044 / NBRC 100330 / Delta H) (Methanobacterium thermoautotrophicum).